Consider the following 163-residue polypeptide: ADP-ribosylation factor-like protein 2-binding protein (163 aa).

The protein belongs to the ARL2BP family. Interacts with GTP bound ARL2 and ARL3; the complex ARL2-ARL2BP as well as ARL2BP alone, binds to SLC25A4/ANT1. Interaction with ARL2 may be required for cilia basal body localization. Interacts with STAT3; interaction is enhanced with ARL2. Found in a complex with ARL2BP, ARL2 and SLC25A6. Found in a complex with ARL2, ARL2BP and SLC25A4. Interacts with STAT2, STAT3 and STAT4.

It localises to the cytoplasm. The protein localises to the mitochondrion intermembrane space. It is found in the cytoskeleton. The protein resides in the microtubule organizing center. Its subcellular location is the centrosome. It localises to the nucleus. The protein localises to the spindle. It is found in the cilium basal body. Together with ARL2, plays a role in the nuclear translocation, retention and transcriptional activity of STAT3. May play a role as an effector of ARL2. This Macaca fascicularis (Crab-eating macaque) protein is ADP-ribosylation factor-like protein 2-binding protein (ARL2BP).